A 389-amino-acid chain; its full sequence is uncharacterized protein (389 aa).

The N-terminal stretch at 1 to 23 (MHFAKLGAIGLLGSIICAYAASA) is a signal peptide.

Belongs to the IUNH family.

The protein localises to the endoplasmic reticulum lumen. This is an uncharacterized protein from Schizosaccharomyces pombe (strain 972 / ATCC 24843) (Fission yeast).